Here is a 155-residue protein sequence, read N- to C-terminus: dCTP deaminase (155 aa).

Residues Arg79–Arg84, Asp95, Gln124, and Tyr138 contribute to the dCTP site.

It belongs to the dCTP deaminase family. Homotrimer.

It catalyses the reaction dCTP + H2O + H(+) = dUTP + NH4(+). It functions in the pathway pyrimidine metabolism; dUMP biosynthesis; dUMP from dCTP (dUTP route): step 1/2. Functionally, catalyzes the deamination of dCTP to dUTP. This chain is dCTP deaminase, found in Thermococcus kodakarensis (strain ATCC BAA-918 / JCM 12380 / KOD1) (Pyrococcus kodakaraensis (strain KOD1)).